Here is a 260-residue protein sequence, read N- to C-terminus: 1-(5-phosphoribosyl)-5-[(5-phosphoribosylamino)methylideneamino] imidazole-4-carboxamide isomerase (260 aa).

Catalysis depends on Asp8, which acts as the Proton acceptor. The Proton donor role is filled by Asp130.

It belongs to the HisA/HisF family.

It localises to the cytoplasm. It catalyses the reaction 1-(5-phospho-beta-D-ribosyl)-5-[(5-phospho-beta-D-ribosylamino)methylideneamino]imidazole-4-carboxamide = 5-[(5-phospho-1-deoxy-D-ribulos-1-ylimino)methylamino]-1-(5-phospho-beta-D-ribosyl)imidazole-4-carboxamide. Its pathway is amino-acid biosynthesis; L-histidine biosynthesis; L-histidine from 5-phospho-alpha-D-ribose 1-diphosphate: step 4/9. In Chlorobaculum tepidum (strain ATCC 49652 / DSM 12025 / NBRC 103806 / TLS) (Chlorobium tepidum), this protein is 1-(5-phosphoribosyl)-5-[(5-phosphoribosylamino)methylideneamino] imidazole-4-carboxamide isomerase.